A 518-amino-acid polypeptide reads, in one-letter code: Serine/threonine-protein kinase PRR1 (518 aa).

The residue at position 1 (M1) is an N-acetylmethionine. The span at 1-12 (MDEYSSIYSQPK) shows a compositional bias: polar residues. Residues 1 to 59 (MDEYSSIYSQPKTPRLKQEGFPDSIGDQHEKALIDENGEEDKKMASTEGTTGDSRSTPL) are disordered. Over residues 16 to 45 (LKQEGFPDSIGDQHEKALIDENGEEDKKMA) the composition is skewed to basic and acidic residues. The span at 47–59 (TEGTTGDSRSTPL) shows a compositional bias: polar residues. The residue at position 132 (S132) is a Phosphoserine. The region spanning 192-508 (WKKVRPIGSG…INEIYESPFV (317 aa)) is the Protein kinase domain. ATP contacts are provided by residues 198–206 (IGSGNFSTV) and K225. D354 functions as the Proton acceptor in the catalytic mechanism.

This sequence belongs to the protein kinase superfamily. CAMK Ser/Thr protein kinase family. NIM1 subfamily.

Its subcellular location is the cytoplasm. It carries out the reaction L-seryl-[protein] + ATP = O-phospho-L-seryl-[protein] + ADP + H(+). It catalyses the reaction L-threonyl-[protein] + ATP = O-phospho-L-threonyl-[protein] + ADP + H(+). Its function is as follows. Protein kinase that functions as a regulator in the pheromone-induced mating pathway downstream of mitogen-activated protein kinase (MAPK) FUS3. Diminishes transcriptional induction of genes in response to pheromone signaling. The chain is Serine/threonine-protein kinase PRR1 (PRR1) from Saccharomyces cerevisiae (strain ATCC 204508 / S288c) (Baker's yeast).